A 290-amino-acid chain; its full sequence is OTU domain-containing protein 6A (290 aa).

Residues 27–117 (QTLKASVPKN…RRHQERMPAA (91 aa)) are disordered. Positions 49–68 (SRLEAEMEQRHKQELEKFGE) are enriched in basic and acidic residues. Residues 95–108 (KAQKRRDRRAHQER) are compositionally biased toward basic residues. Residues 142–276 (LEMKTIPADG…GEHYNSVKPI (135 aa)) form the OTU domain. The tract at residues 147-153 (IPADGHC) is cys-loop. Asp-150 is an active-site residue. The Nucleophile role is filled by Cys-153. Residues 211-221 (IVHNASWGGQL) form a variable-loop region. The tract at residues 259–269 (YLHYACDFGEH) is his-loop. His-269 is an active-site residue.

The catalysed reaction is Thiol-dependent hydrolysis of ester, thioester, amide, peptide and isopeptide bonds formed by the C-terminal Gly of ubiquitin (a 76-residue protein attached to proteins as an intracellular targeting signal).. In terms of biological role, deubiquitinating enzyme that hydrolyzes 'Lys-27'-, 'Lys-29'- and 'Lys-33'-linked polyubiquitin chains. Also able to hydrolyze 'Lys-11'-linked ubiquitin chains. This chain is OTU domain-containing protein 6A (Otud6a), found in Mus musculus (Mouse).